We begin with the raw amino-acid sequence, 387 residues long: Large ribosomal subunit protein uL3 (387 aa).

It belongs to the universal ribosomal protein uL3 family.

The protein localises to the cytoplasm. The polypeptide is Large ribosomal subunit protein uL3 (RPL3) (Eremothecium gossypii (strain ATCC 10895 / CBS 109.51 / FGSC 9923 / NRRL Y-1056) (Yeast)).